The following is a 374-amino-acid chain: Eukaryotic translation initiation factor 3 subunit M (374 aa).

One can recognise a PCI domain in the interval 180–339 (TAAKVMVELL…RKVVVSHSTH (160 aa)).

This sequence belongs to the eIF-3 subunit M family. As to quaternary structure, component of the eukaryotic translation initiation factor 3 (eIF-3) complex, which is composed of 13 subunits: EIF3A, EIF3B, EIF3C, EIF3D, EIF3E, EIF3F, EIF3G, EIF3H, EIF3I, EIF3J, EIF3K, EIF3L and EIF3M.

The protein resides in the cytoplasm. Functionally, component of the eukaryotic translation initiation factor 3 (eIF-3) complex, which is involved in protein synthesis of a specialized repertoire of mRNAs and, together with other initiation factors, stimulates binding of mRNA and methionyl-tRNAi to the 40S ribosome. The eIF-3 complex specifically targets and initiates translation of a subset of mRNAs involved in cell proliferation. This is Eukaryotic translation initiation factor 3 subunit M from Gallus gallus (Chicken).